Here is a 363-residue protein sequence, read N- to C-terminus: MSGNTYGKLFTVTTAGESHGPALVAIVDGCPPGLELSARDLQRDLDRRKPGTSRHTTQRQEADEVEILSGVFEGKTTGTPIGLLIRNTDQKSKDYSAIKDLFRPAHADYTYHHKYGVRDYRGGGRSSARETAMRVAAGAIAKKYLAGLGIQVRGYMSQLGPIEIPFRSWDSVEQNAFFSPDPDKVPELEAYMDQLRRDQDSVGAKITVVAEGVPPGLGEPIFDRLDAELAHALMSINAVKGVEIGAGFASIAQRGTEHRDELTPQGFLSNNAGGILGGISSGQPIVAHLALKPTSSITTPGRSIDTAGEPVDMITKGRHDPCVGIRATPIAEAMMAIVLLDQLLRQRGQNADVRVDTPVLPQL.

Residues 42-61 (QRDLDRRKPGTSRHTTQRQE) are disordered. Residues Arg48 and Arg54 each coordinate NADP(+). Residues 125–127 (RSS), 237–238 (NA), Gly277, 292–296 (KPTSS), and Arg318 contribute to the FMN site.

It belongs to the chorismate synthase family. In terms of assembly, homotetramer. The cofactor is FMNH2.

The catalysed reaction is 5-O-(1-carboxyvinyl)-3-phosphoshikimate = chorismate + phosphate. Its pathway is metabolic intermediate biosynthesis; chorismate biosynthesis; chorismate from D-erythrose 4-phosphate and phosphoenolpyruvate: step 7/7. Catalyzes the anti-1,4-elimination of the C-3 phosphate and the C-6 proR hydrogen from 5-enolpyruvylshikimate-3-phosphate (EPSP) to yield chorismate, which is the branch point compound that serves as the starting substrate for the three terminal pathways of aromatic amino acid biosynthesis. This reaction introduces a second double bond into the aromatic ring system. This is Chorismate synthase from Pseudomonas aeruginosa (strain LESB58).